A 425-amino-acid polypeptide reads, in one-letter code: Formyl-CoA:oxalate CoA-transferase (425 aa).

CoA is bound by residues 17-18 (QS), arginine 38, 72-75 (LDTK), 96-98 (NFG), arginine 104, and 136-139 (KVYE). Catalysis depends on aspartate 168, which acts as the Nucleophile. 247–249 (GGQ) serves as a coordination point for substrate.

The protein belongs to the CoA-transferase III family. Frc subfamily. Homodimer.

It catalyses the reaction formyl-CoA + oxalate = oxalyl-CoA + formate. It participates in metabolic intermediate degradation; oxalate degradation; CO(2) and formate from oxalate: step 1/2. Its function is as follows. Involved in the catabolism of oxalate and in the adapatation to low pH via the induction of the oxalate-dependent acid tolerance response (ATR). Catalyzes the transfer of the CoA moiety from formyl-CoA to oxalate. The protein is Formyl-CoA:oxalate CoA-transferase of Rhodopseudomonas palustris (strain ATCC BAA-98 / CGA009).